The sequence spans 290 residues: UPF0761 membrane protein YihY (290 aa).

6 helical membrane-spanning segments follow: residues leucine 44–phenylalanine 64, valine 104–leucine 124, phenylalanine 140–isoleucine 160, isoleucine 183–threonine 203, alanine 210–leucine 230, and valine 244–leucine 264.

The protein belongs to the UPF0761 family.

The protein resides in the cell inner membrane. The sequence is that of UPF0761 membrane protein YihY from Salmonella agona (strain SL483).